A 122-amino-acid chain; its full sequence is Small ribosomal subunit protein uS13 (122 aa).

Positions 93–122 are disordered; that stretch reads RLSLPVRGQRTKTNSRTRKGKRKTVAGKKK. Over residues 101-122 the composition is skewed to basic residues; it reads QRTKTNSRTRKGKRKTVAGKKK.

The protein belongs to the universal ribosomal protein uS13 family. In terms of assembly, part of the 30S ribosomal subunit. Forms a loose heterodimer with protein S19. Forms two bridges to the 50S subunit in the 70S ribosome.

Functionally, located at the top of the head of the 30S subunit, it contacts several helices of the 16S rRNA. In the 70S ribosome it contacts the 23S rRNA (bridge B1a) and protein L5 of the 50S subunit (bridge B1b), connecting the 2 subunits; these bridges are implicated in subunit movement. Contacts the tRNAs in the A and P-sites. This Chlamydia abortus (strain DSM 27085 / S26/3) (Chlamydophila abortus) protein is Small ribosomal subunit protein uS13.